The sequence spans 277 residues: Co-chaperone protein DjlA (277 aa).

Over 1 to 6 the chain is Periplasmic; that stretch reads MRYWGK. A helical transmembrane segment spans residues 7–31; that stretch reads LLGLVLGVMYAPGVVGALLGLLVGH. Topologically, residues 32 to 277 are cytoplasmic; it reads MVDRALGAKR…DLIKREKGFK (246 aa). Positions 211 to 277 constitute a J domain; sequence DACKVLGVNS…DLIKREKGFK (67 aa).

Homodimer.

It localises to the cell inner membrane. In terms of biological role, regulatory DnaK co-chaperone. Direct interaction between DnaK and DjlA is needed for the induction of the wcaABCDE operon, involved in the synthesis of a colanic acid polysaccharide capsule, possibly through activation of the RcsB/RcsC phosphotransfer signaling pathway. The colanic acid capsule may help the bacterium survive conditions outside the host. This is Co-chaperone protein DjlA from Yersinia pseudotuberculosis serotype I (strain IP32953).